A 210-amino-acid chain; its full sequence is Small ribosomal subunit protein uS5 (210 aa).

The span at 1 to 23 (MARTPSSDRPERGRGGERGDRPN) shows a compositional bias: basic and acidic residues. Residues 1–40 (MARTPSSDRPERGRGGERGDRPNRGRGGAEQTPREREESE) form a disordered region. Residues 41–104 (FVDKLVHINR…EQAKRNMIKI (64 aa)) form the S5 DRBM domain.

This sequence belongs to the universal ribosomal protein uS5 family. As to quaternary structure, part of the 30S ribosomal subunit. Contacts proteins S4 and S8.

Functionally, with S4 and S12 plays an important role in translational accuracy. In terms of biological role, located at the back of the 30S subunit body where it stabilizes the conformation of the head with respect to the body. The sequence is that of Small ribosomal subunit protein uS5 from Paramagnetospirillum magneticum (strain ATCC 700264 / AMB-1) (Magnetospirillum magneticum).